The following is a 194-amino-acid chain: ATP-dependent Clp protease proteolytic subunit (194 aa).

Residue Ser-97 is the Nucleophile of the active site. His-122 is an active-site residue.

It belongs to the peptidase S14 family. In terms of assembly, fourteen ClpP subunits assemble into 2 heptameric rings which stack back to back to give a disk-like structure with a central cavity, resembling the structure of eukaryotic proteasomes.

It localises to the cytoplasm. The catalysed reaction is Hydrolysis of proteins to small peptides in the presence of ATP and magnesium. alpha-casein is the usual test substrate. In the absence of ATP, only oligopeptides shorter than five residues are hydrolyzed (such as succinyl-Leu-Tyr-|-NHMec, and Leu-Tyr-Leu-|-Tyr-Trp, in which cleavage of the -Tyr-|-Leu- and -Tyr-|-Trp bonds also occurs).. In terms of biological role, cleaves peptides in various proteins in a process that requires ATP hydrolysis. Has a chymotrypsin-like activity. Plays a major role in the degradation of misfolded proteins. The protein is ATP-dependent Clp protease proteolytic subunit of Lactobacillus helveticus (strain DPC 4571).